Reading from the N-terminus, the 80-residue chain is CLAVATA3/ESR (CLE)-related protein 4 (80 aa).

Positions 1-22 are cleaved as a signal peptide; the sequence is MASFKLWVCLILLLLEFSVHQC. Positions 55–80 are disordered; the sequence is SKDGQTVLGTLDSKRLSPGGPDPRHH. Hydroxyproline occurs at positions 72 and 75. An O-linked (Ara...) hydroxyproline glycan is attached at P75.

It belongs to the CLV3/ESR signal peptide family. The O-glycosylation (arabinosylation) of the hydroxyproline Pro-75 enhances binding affinity of the CLE4p peptide for its receptor. As to expression, expressed in roots and seedlings.

Its subcellular location is the secreted. It is found in the extracellular space. Its function is as follows. Extracellular signal peptide that regulates cell fate. The chain is CLAVATA3/ESR (CLE)-related protein 4 from Arabidopsis thaliana (Mouse-ear cress).